The primary structure comprises 439 residues: Histidine--tRNA ligase (439 aa).

This sequence belongs to the class-II aminoacyl-tRNA synthetase family. In terms of assembly, homodimer.

It localises to the cytoplasm. It catalyses the reaction tRNA(His) + L-histidine + ATP = L-histidyl-tRNA(His) + AMP + diphosphate + H(+). In Leptospira interrogans serogroup Icterohaemorrhagiae serovar copenhageni (strain Fiocruz L1-130), this protein is Histidine--tRNA ligase.